The sequence spans 1164 residues: DNA-directed RNA polymerase subunit beta' (1164 aa).

Positions 60, 62, 75, and 78 each coordinate Zn(2+). 3 residues coordinate Mg(2+): Asp-449, Asp-451, and Asp-453. Positions 776, 850, 857, and 860 each coordinate Zn(2+).

Belongs to the RNA polymerase beta' chain family. The RNAP catalytic core consists of 2 alpha, 1 beta, 1 beta' and 1 omega subunit. When a sigma factor is associated with the core the holoenzyme is formed, which can initiate transcription. Mg(2+) serves as cofactor. It depends on Zn(2+) as a cofactor.

The enzyme catalyses RNA(n) + a ribonucleoside 5'-triphosphate = RNA(n+1) + diphosphate. In terms of biological role, DNA-dependent RNA polymerase catalyzes the transcription of DNA into RNA using the four ribonucleoside triphosphates as substrates. This chain is DNA-directed RNA polymerase subunit beta', found in Moorella thermoacetica (strain ATCC 39073 / JCM 9320).